The chain runs to 183 residues: ER membrane protein complex subunit 4 (183 aa).

Threonine 2 is modified (N-acetylthreonine). Topologically, residues 2-66 are cytoplasmic; the sequence is TAQGGLVANR…VQETDRILVE (65 aa). The tract at residues 20–39 is disordered; the sequence is ELSGPGGGSRGRSDRGSGQG. Serine 36 is modified (phosphoserine). A helical membrane pass occupies residues 67 to 87; sequence KRCWDIALGPLKQIPMNLFIM. At 88–98 the chain is on the lumenal side; the sequence is YMAGNTISIFP. Residues 99–120 form a helical membrane-spanning segment; sequence TMMVCMMAWRPIQALMAISATF. The Cytoplasmic portion of the chain corresponds to 121-127; that stretch reads KMLESSS. The helical transmembrane segment at 128–148 threads the bilayer; that stretch reads QKFLQGLVYLIGNLMGLALAV. The Lumenal portion of the chain corresponds to 149–183; sequence YKCQSMGLLPTHASDWLAFIEPPERMEFSGGGLLL.

Belongs to the EMC4 family. Component of the ER membrane protein complex (EMC). In terms of tissue distribution, isoform 1 is expressed in brain and heart. Isoform 2 is expressed in heart.

Its subcellular location is the endoplasmic reticulum membrane. Its function is as follows. Part of the endoplasmic reticulum membrane protein complex (EMC) that enables the energy-independent insertion into endoplasmic reticulum membranes of newly synthesized membrane proteins. Preferentially accommodates proteins with transmembrane domains that are weakly hydrophobic or contain destabilizing features such as charged and aromatic residues. Involved in the cotranslational insertion of multi-pass membrane proteins in which stop-transfer membrane-anchor sequences become ER membrane spanning helices. It is also required for the post-translational insertion of tail-anchored/TA proteins in endoplasmic reticulum membranes. By mediating the proper cotranslational insertion of N-terminal transmembrane domains in an N-exo topology, with translocated N-terminus in the lumen of the ER, controls the topology of multi-pass membrane proteins like the G protein-coupled receptors. By regulating the insertion of various proteins in membranes, it is indirectly involved in many cellular processes. This is ER membrane protein complex subunit 4 (EMC4) from Homo sapiens (Human).